A 158-amino-acid polypeptide reads, in one-letter code: Cyclic pyranopterin monophosphate synthase (158 aa).

Substrate is bound by residues 75–77 and 113–114; these read LCH and ME. Residue aspartate 128 is part of the active site.

This sequence belongs to the MoaC family. As to quaternary structure, homohexamer; trimer of dimers.

It carries out the reaction (8S)-3',8-cyclo-7,8-dihydroguanosine 5'-triphosphate = cyclic pyranopterin phosphate + diphosphate. Its pathway is cofactor biosynthesis; molybdopterin biosynthesis. Its function is as follows. Catalyzes the conversion of (8S)-3',8-cyclo-7,8-dihydroguanosine 5'-triphosphate to cyclic pyranopterin monophosphate (cPMP). This chain is Cyclic pyranopterin monophosphate synthase, found in Paraburkholderia phytofirmans (strain DSM 17436 / LMG 22146 / PsJN) (Burkholderia phytofirmans).